We begin with the raw amino-acid sequence, 189 residues long: Phomopsin biosynthesis cluster protein D (189 aa).

This sequence belongs to the oryJ family.

Its function is as follows. Part of the gene cluster that mediates the biosynthesis of the phomopsins, a group of hexapeptide mycotoxins which infects lupins and causes lupinosis disease in livestock. The role of phomC within the phomopsins biosynthesis pathway has still to be determined. The pathway starts with the processing of the precursor phomA by several endopeptidases including kexin proteases as well as the cluster-specific S41 family peptidase phomP1 and the oligopeptidase phomG to produce 10 identical copies of the hexapeptide Tyr-Val-Ile-Pro-Ile-Asp. After being excised from the precursor peptide, the core peptides are cyclized and modified post-translationally by enzymes encoded within the gene cluster. The timing and order of proteolysis of the phomA precursor and PTMs are still unknown. Two tyrosinase-like enzymes, phomQ1 and phomQ2, catalyze the chlorination and hydroxylation of Tyr, respectively. PhomYb, is proposed to be involved in the construction of the macrocyclic structure. The other 4 ustYa family proteins may be involved in PTMs that generate the unique structure of phomopsin A. PhomYa is required for the hydroxylation of C-beta of Tyr. PhomYc, phomYd, and phomYe are responsible for the biosynthesis of 2,3-dehydroisoleucine (dIle), 2,3-dehydroaspartic acid (dAsp), and 3,4-dehydroproline (dPro), respectively. While dIle formation by phomYc is indispensable for the installation of dAsp by phomYd, the order of the other PTMs have not been elucidated yet. Most of the biosynthetic enzymes likely have broad substrate specificity, and thus, there might be a metabolic grid from a precursor to phomopsin A. The enzyme(s) responsible for the biosynthesis of 3,4-dehydrovaline (dVal) have also not been identified yet. Finally, phomM acts as an S-adenosylmethionine-dependent alpha-N-methyltransferase that catalyzes two successive N-methylation reactions, converting N-desmethyl-phomopsin A to phomopsin A and phomopsin A further to an N,N-dimethylated congener called phomopsin E. This is Phomopsin biosynthesis cluster protein D from Diaporthe leptostromiformis (Lupinosis disease fungus).